The primary structure comprises 227 residues: Ribosomal RNA large subunit methyltransferase E (227 aa).

Residues G78, W80, D103, D119, and D143 each coordinate S-adenosyl-L-methionine. Residue K183 is the Proton acceptor of the active site.

The protein belongs to the class I-like SAM-binding methyltransferase superfamily. RNA methyltransferase RlmE family.

The protein localises to the cytoplasm. It catalyses the reaction uridine(2552) in 23S rRNA + S-adenosyl-L-methionine = 2'-O-methyluridine(2552) in 23S rRNA + S-adenosyl-L-homocysteine + H(+). Its function is as follows. Specifically methylates the uridine in position 2552 of 23S rRNA at the 2'-O position of the ribose in the fully assembled 50S ribosomal subunit. This chain is Ribosomal RNA large subunit methyltransferase E, found in Rickettsia bellii (strain RML369-C).